A 280-amino-acid chain; its full sequence is MLPVLIFPQFDPVMVHVGPLVIRWYAMAYITALLVGWRLVRHLVRLAPRAATDVQVDDFLTWATLGVVLGGRLGYILFYQPAVYLAHPLAALQVWHGGMSFHGGALGVIVALALFTWRNGLSFLGFSDRVTVVVPMGLGLGRIANFINGELWGRPAPASLPWAMVFPQAGPEPRHPSELYEALLEGLVLFSVMWIVARRPAIRERPGFLAGLFLFGYAVARSICECFREPDAFIGFLPFGTTMGQILCIPMAIAGVGLMAQAMMRPARPVLMPALPADSP.

A run of 2 helical transmembrane segments spans residues 59 to 79 (FLTW…ILFY) and 97 to 117 (GGMS…LFTW). Residue Arg142 participates in a 1,2-diacyl-sn-glycero-3-phospho-(1'-sn-glycerol) binding. The next 2 membrane-spanning stretches (helical) occupy residues 207 to 227 (GFLA…CECF) and 233 to 253 (FIGF…PMAI).

Belongs to the Lgt family.

The protein resides in the cell inner membrane. It catalyses the reaction L-cysteinyl-[prolipoprotein] + a 1,2-diacyl-sn-glycero-3-phospho-(1'-sn-glycerol) = an S-1,2-diacyl-sn-glyceryl-L-cysteinyl-[prolipoprotein] + sn-glycerol 1-phosphate + H(+). Its pathway is protein modification; lipoprotein biosynthesis (diacylglyceryl transfer). Its function is as follows. Catalyzes the transfer of the diacylglyceryl group from phosphatidylglycerol to the sulfhydryl group of the N-terminal cysteine of a prolipoprotein, the first step in the formation of mature lipoproteins. In Gluconacetobacter diazotrophicus (strain ATCC 49037 / DSM 5601 / CCUG 37298 / CIP 103539 / LMG 7603 / PAl5), this protein is Phosphatidylglycerol--prolipoprotein diacylglyceryl transferase.